The primary structure comprises 110 residues: UPF0122 protein GK1195 (110 aa).

It belongs to the UPF0122 family.

Might take part in the signal recognition particle (SRP) pathway. This is inferred from the conservation of its genetic proximity to ftsY/ffh. May be a regulatory protein. In Geobacillus kaustophilus (strain HTA426), this protein is UPF0122 protein GK1195.